A 332-amino-acid chain; its full sequence is Fructose-1,6-bisphosphatase class 1 (332 aa).

Positions 89, 110, 112, and 113 each coordinate Mg(2+). Substrate-binding positions include D113–S116, N206, Y239, Y257–Y259, and K269. E275 contacts Mg(2+).

Belongs to the FBPase class 1 family. In terms of assembly, homotetramer. The cofactor is Mg(2+).

It is found in the cytoplasm. It carries out the reaction beta-D-fructose 1,6-bisphosphate + H2O = beta-D-fructose 6-phosphate + phosphate. It functions in the pathway carbohydrate biosynthesis; gluconeogenesis. In Enterobacter sp. (strain 638), this protein is Fructose-1,6-bisphosphatase class 1.